Consider the following 343-residue polypeptide: Tetraacyldisaccharide 4'-kinase (343 aa).

58–65 (VAGGAGKT) is a binding site for ATP.

Belongs to the LpxK family.

It catalyses the reaction a lipid A disaccharide + ATP = a lipid IVA + ADP + H(+). Its pathway is glycolipid biosynthesis; lipid IV(A) biosynthesis; lipid IV(A) from (3R)-3-hydroxytetradecanoyl-[acyl-carrier-protein] and UDP-N-acetyl-alpha-D-glucosamine: step 6/6. In terms of biological role, transfers the gamma-phosphate of ATP to the 4'-position of a tetraacyldisaccharide 1-phosphate intermediate (termed DS-1-P) to form tetraacyldisaccharide 1,4'-bis-phosphate (lipid IVA). The chain is Tetraacyldisaccharide 4'-kinase from Polaromonas naphthalenivorans (strain CJ2).